The primary structure comprises 640 residues: 1-deoxy-D-xylulose-5-phosphate synthase (640 aa).

Thiamine diphosphate-binding positions include His79 and 120 to 122; that span reads AHA. Asp151 is a binding site for Mg(2+). Thiamine diphosphate is bound by residues 152-153, Asn180, Tyr287, and Glu369; that span reads GS. Asn180 is a binding site for Mg(2+).

This sequence belongs to the transketolase family. DXPS subfamily. As to quaternary structure, homodimer. The cofactor is Mg(2+). Thiamine diphosphate serves as cofactor.

The catalysed reaction is D-glyceraldehyde 3-phosphate + pyruvate + H(+) = 1-deoxy-D-xylulose 5-phosphate + CO2. Its pathway is metabolic intermediate biosynthesis; 1-deoxy-D-xylulose 5-phosphate biosynthesis; 1-deoxy-D-xylulose 5-phosphate from D-glyceraldehyde 3-phosphate and pyruvate: step 1/1. In terms of biological role, catalyzes the acyloin condensation reaction between C atoms 2 and 3 of pyruvate and glyceraldehyde 3-phosphate to yield 1-deoxy-D-xylulose-5-phosphate (DXP). The sequence is that of 1-deoxy-D-xylulose-5-phosphate synthase from Hyphomonas neptunium (strain ATCC 15444).